The primary structure comprises 141 residues: Nucleoside diphosphate kinase (141 aa).

6 residues coordinate ATP: Lys-11, Phe-59, Arg-87, Thr-93, Arg-104, and Asn-114. His-117 acts as the Pros-phosphohistidine intermediate in catalysis.

This sequence belongs to the NDK family. In terms of assembly, homotetramer. The cofactor is Mg(2+).

It is found in the cytoplasm. The enzyme catalyses a 2'-deoxyribonucleoside 5'-diphosphate + ATP = a 2'-deoxyribonucleoside 5'-triphosphate + ADP. It catalyses the reaction a ribonucleoside 5'-diphosphate + ATP = a ribonucleoside 5'-triphosphate + ADP. Its function is as follows. Major role in the synthesis of nucleoside triphosphates other than ATP. The ATP gamma phosphate is transferred to the NDP beta phosphate via a ping-pong mechanism, using a phosphorylated active-site intermediate. The protein is Nucleoside diphosphate kinase of Polaromonas sp. (strain JS666 / ATCC BAA-500).